Here is a 1374-residue protein sequence, read N- to C-terminus: DNA-directed RNA polymerase subunit beta (1374 aa).

The protein belongs to the RNA polymerase beta chain family. As to quaternary structure, the RNAP catalytic core consists of 2 alpha, 1 beta, 1 beta' and 1 omega subunit. When a sigma factor is associated with the core the holoenzyme is formed, which can initiate transcription.

The enzyme catalyses RNA(n) + a ribonucleoside 5'-triphosphate = RNA(n+1) + diphosphate. DNA-dependent RNA polymerase catalyzes the transcription of DNA into RNA using the four ribonucleoside triphosphates as substrates. The sequence is that of DNA-directed RNA polymerase subunit beta from Acidovorax sp. (strain JS42).